Consider the following 988-residue polypeptide: Protein argonaute 10 (988 aa).

Over residues 1–11 (MPIRQMKDSSE) the composition is skewed to basic and acidic residues. The interval 1–103 (MPIRQMKDSS…PPSQTTSSAV (103 aa)) is disordered. Positions 41-57 (PVTVTTPATVTQSQASS) are enriched in low complexity. A compositionally biased stretch (basic residues) spans 64-73 (NRSRRRNRGG). The PAZ domain maps to 338–451 (PVIEFVAQLL…LPMEACKIVE (114 aa)). The 322-residue stretch at 625–946 (LLLAILPDNN…AAFRARFYLE (322 aa)) folds into the Piwi domain.

Belongs to the argonaute family. Ago subfamily. In terms of assembly, interacts with GATA18/HAN and KNAT1/BP. Interacts with RICE1 and RICE2 that act as cofactors. Expressed in roots, stems, leaves, developing embryo, siliques, inflorescences, provascular tissue, shoot apical meristem (SAM) and adaxial (upper) sides of lateral organ primordia. Observed in the floral meristem, the adaxial side of sepal primordia, and the provascular tissue.

The protein resides in the cytoplasm. Its function is as follows. Involved in RNA-mediated post-transcriptional gene silencing (PTGS). Main component of the RNA-induced silencing complex (RISC) that binds to a short guide RNA such as a microRNA (miRNA) or small interfering RNA (siRNA). RISC uses the mature miRNA or siRNA as a guide for slicer-directed cleavage of homologous mRNAs to repress gene expression. Required for reliable formation of primary and axillary shoot apical meristems. Specifies leaf adaxial identity by repressing the miR165 and miR166 microRNAs in the embryonic shoot apex, in the shoot apical meristem (SAM) and leaf. Represses the microRNA miR398 which targets CCS1 chaperone mRNAs for translational inhibition. Acts as a negative regulator of AGO1 protein level. Like AGO1, is required for stem cell function and organ polarity. Unlike AGO1, is not subjected to small RNA-mediated repression itself. Essential for multiple processes in development. Coregulates, with GATA18/HAN, the shoot apical meristem (SAM) organization. The chain is Protein argonaute 10 from Arabidopsis thaliana (Mouse-ear cress).